The following is a 954-amino-acid chain: Regulatory protein FlaEY (954 aa).

Functionally, functions in trans to modulate the level of transcription of the flagellin genes and several genes encoding chemotaxis functions. It is itself temporally controlled. This is Regulatory protein FlaEY (flaEY) from Caulobacter vibrioides (strain ATCC 19089 / CIP 103742 / CB 15) (Caulobacter crescentus).